A 458-amino-acid polypeptide reads, in one-letter code: MKSNFSKFKDFIKYKKVAVVGIGVSNRPLIKFLVKLGAKVTAFDKKHREKLGSISFELEEIGVDLVLGENYLDKLDGYDVIFKTPSMRIDRPEFVKAKESGAYITSEMEEFIKYCPAKVFGITGSDGKTTTTTLVYEMLKREGYRTWVGGNIGTPLFANIEEMKEDHMVVLELSSFQLMTMDVSPEISLITNLSPNHLDVHKDFEEYVWAKKNIFKYQSSNNLLVLNKDDDLTNGMENEALGDVLKFSLVEKVYNGACLSNNKLTIQGKEVCDSKDINLKGRHNIANLLAAFCMVNKYVSIDSMKYVATNFSGVEHRCEFIREVNGVKYYNDSIASSPSRTLAGLNSFEKPVILIAGGYDKKIPFEPLAEGGYDKIKILILMGDTKNKIRSAFEKVISYKKCEMEIVIVNSMEEAVKVADDMAEKGDIITLSPACASFDMYPNFEIRGNEFKNIVNSL.

Residue 124-130 (GSDGKTT) coordinates ATP.

It belongs to the MurCDEF family.

The protein resides in the cytoplasm. The catalysed reaction is UDP-N-acetyl-alpha-D-muramoyl-L-alanine + D-glutamate + ATP = UDP-N-acetyl-alpha-D-muramoyl-L-alanyl-D-glutamate + ADP + phosphate + H(+). The protein operates within cell wall biogenesis; peptidoglycan biosynthesis. Functionally, cell wall formation. Catalyzes the addition of glutamate to the nucleotide precursor UDP-N-acetylmuramoyl-L-alanine (UMA). The polypeptide is UDP-N-acetylmuramoylalanine--D-glutamate ligase (Clostridium botulinum (strain Okra / Type B1)).